The primary structure comprises 555 residues: Formate--tetrahydrofolate ligase (555 aa).

Residue 65-72 coordinates ATP; it reads TPAGEGKS.

It belongs to the formate--tetrahydrofolate ligase family.

It carries out the reaction (6S)-5,6,7,8-tetrahydrofolate + formate + ATP = (6R)-10-formyltetrahydrofolate + ADP + phosphate. The protein operates within one-carbon metabolism; tetrahydrofolate interconversion. This chain is Formate--tetrahydrofolate ligase, found in Staphylococcus aureus (strain Mu3 / ATCC 700698).